The following is a 342-amino-acid chain: N-acetyl-gamma-glutamyl-phosphate reductase (342 aa).

The active site involves C147.

This sequence belongs to the NAGSA dehydrogenase family. Type 1 subfamily.

Its subcellular location is the cytoplasm. It carries out the reaction N-acetyl-L-glutamate 5-semialdehyde + phosphate + NADP(+) = N-acetyl-L-glutamyl 5-phosphate + NADPH + H(+). The protein operates within amino-acid biosynthesis; L-arginine biosynthesis; N(2)-acetyl-L-ornithine from L-glutamate: step 3/4. Catalyzes the NADPH-dependent reduction of N-acetyl-5-glutamyl phosphate to yield N-acetyl-L-glutamate 5-semialdehyde. This chain is N-acetyl-gamma-glutamyl-phosphate reductase, found in Campylobacter jejuni subsp. jejuni serotype O:6 (strain 81116 / NCTC 11828).